The sequence spans 359 residues: Molybdenum import ATP-binding protein ModC (359 aa).

In terms of domain architecture, ABC transporter spans 1 to 233 (MSGLTVSIRG…IDAESEGGGV (233 aa)). Residue 32–39 (GHSGAGKT) participates in ATP binding. The Mop domain occupies 289–355 (AISIRNLLPV…VKAVSVDRAA (67 aa)).

The protein belongs to the ABC transporter superfamily. Molybdate importer (TC 3.A.1.8) family. The complex is composed of two ATP-binding proteins (ModC), two transmembrane proteins (ModB) and a solute-binding protein (ModA).

It localises to the cell inner membrane. The enzyme catalyses molybdate(out) + ATP + H2O = molybdate(in) + ADP + phosphate + H(+). Part of the ABC transporter complex ModABC involved in molybdenum import. Responsible for energy coupling to the transport system. The sequence is that of Molybdenum import ATP-binding protein ModC from Brucella melitensis biotype 1 (strain ATCC 23456 / CCUG 17765 / NCTC 10094 / 16M).